Consider the following 529-residue polypeptide: MSVKWTSVILLIQLSFYFSSGSCGKVLVWAAEYSHWMNMKTILEELVQRGHEVTVLASSASILFDPNNSSALKIEVFPTSLTKTEFENIIRQQIKRWSELPKDTFWLYFSQMQEIMWKFGDITRNFCKDVVSNKKLMKKLQKSRFDVVFADAIFPCSELLAELLNTPLVYSLRFTPGYNFEKHCGGFLFPPSYVPVVMSELSDHMTFMERVKNMIYMLYFDFCFQIYAMKKWDQFYSEVLGRPTTLSETMGKADIWLIRNSWNFQFPHPLLPNVDFVGGLHCKPAKPLPKEMEEFVQSSGENGVVVFSLGSMVTNMKEERANVIASALAQIPQKVLWRFDGKKPDTLGLNTRLYKWIPQNDLLGHPKTRAFITHGGSNGIYEAIYHGVPMVGIPLFADQPDNIAHMKAKGAAVRLDFDTMSSTDLVNALKTVINDPLYKENVMKLSRIQHDQPVKPLDRAVFWIEFVMRHKGAKHLRPAAHDLTWFQYHSLDVIGFLLACVATVIFIIMKCCLFCFWKFARKGKKGKSD.

The first 21 residues, 1 to 21, serve as a signal peptide directing secretion; it reads MSVKWTSVILLIQLSFYFSSG. Asparagine 67 and asparagine 68 each carry an N-linked (GlcNAc...) asparagine glycan. Residues 493-513 form a helical membrane-spanning segment; the sequence is VIGFLLACVATVIFIIMKCCL.

This sequence belongs to the UDP-glycosyltransferase family. Expressed in liver, prostate, kidney, testis, adrenal, bile duct, bladder, colon, small intestine, cerebellum and pancreas.

It is found in the microsome membrane. The protein resides in the endoplasmic reticulum membrane. It carries out the reaction glucuronate acceptor + UDP-alpha-D-glucuronate = acceptor beta-D-glucuronoside + UDP + H(+). In terms of biological role, UDPGT is of major importance in the conjugation and subsequent elimination of potentially toxic xenobiotics and endogenous compounds. This isozyme displays activity toward 3-hydroxyandrogens. It is principally active on C19 steroids having a hydroxyl group at position 3-alpha of the steroid molecule and also active on planar phenols and bile acids. This is UDP-glucuronosyltransferase 2B18 (UGT2B18) from Macaca fascicularis (Crab-eating macaque).